A 607-amino-acid chain; its full sequence is Elongation factor 4 (607 aa).

The 183-residue stretch at 11-193 (GKIRNFSIIA…QIVEKVPAPT (183 aa)) folds into the tr-type G domain. GTP-binding positions include 23–28 (DHGKST) and 140–143 (NKID).

The protein belongs to the TRAFAC class translation factor GTPase superfamily. Classic translation factor GTPase family. LepA subfamily.

The protein localises to the cell membrane. It carries out the reaction GTP + H2O = GDP + phosphate + H(+). In terms of biological role, required for accurate and efficient protein synthesis under certain stress conditions. May act as a fidelity factor of the translation reaction, by catalyzing a one-codon backward translocation of tRNAs on improperly translocated ribosomes. Back-translocation proceeds from a post-translocation (POST) complex to a pre-translocation (PRE) complex, thus giving elongation factor G a second chance to translocate the tRNAs correctly. Binds to ribosomes in a GTP-dependent manner. In Streptococcus pneumoniae (strain JJA), this protein is Elongation factor 4.